The primary structure comprises 106 residues: MNNERIYQVLKGPVFSEKAQVLGETAGVQVFKVDINATKLEIKKAVEKLFGVDVLKVNTTITKGKSKRFGKTLGRRSDVKKAYVTLKAGQDVEMADLGDTAESAAE.

The protein belongs to the universal ribosomal protein uL23 family. In terms of assembly, part of the 50S ribosomal subunit. Contacts protein L29, and trigger factor when it is bound to the ribosome.

Functionally, one of the early assembly proteins it binds 23S rRNA. One of the proteins that surrounds the polypeptide exit tunnel on the outside of the ribosome. Forms the main docking site for trigger factor binding to the ribosome. This chain is Large ribosomal subunit protein uL23, found in Acinetobacter baylyi (strain ATCC 33305 / BD413 / ADP1).